Reading from the N-terminus, the 216-residue chain is Ras-related protein Rab-11A (216 aa).

At Gly2 the chain carries N-acetylglycine. GTP contacts are provided by Ser20, Gly21, Val22, Gly23, Lys24, Ser25, Asn26, Asn37, Leu38, Ser40, Ser42, and Thr43. Ser25 contributes to the Mg(2+) binding site. The Switch 1 signature appears at 36–47 (FNLESKSTIGVE). Residues Thr43 and Asp66 each coordinate Mg(2+). The Switch 2 motif lies at 67–86 (TAGQERYRAITSAYYRGAVG). Residues Gly69, Asn124, Lys125, Asp127, Ala155, and Leu156 each coordinate GTP. Residues 183-207 (DRRENDMSPSNNVVPIHVPPTTENK) form a disordered region. S-geranylgeranyl cysteine attachment occurs at residues Cys212 and Cys213. Cysteine methyl ester is present on Cys213. Positions 214–216 (QNI) are cleaved as a propeptide — removed in mature form.

This sequence belongs to the small GTPase superfamily. Rab family. As to quaternary structure, interacts (GTP-bound form) with RAB11FIPs (via their C-termini) including RAB11FIP1, RAB11FIP2, RAB11FIP3, RAB11FIP4 and RAB11FIP5 effectors. Forms a complex with RAB11FIP3 and dynein intermediate chain DYNC1LI1; the interaction between RAB11A1 and RAB11FIP3 is direct; the complex regulates endocytic trafficking. Interacts with EVI5; EVI5 and RAB11FIP3 may be mutually exclusive and compete for binding RAB11A. Interacts with SGSM1, SGSM2, SGSM3 and VIPAS39. Interacts with EXOC6 in a GTP-dependent manner. Interacts with RAB11FIP5. Interacts with STXBP6. Interacts (GDP-bound form) with ZFYVE27. Interacts with BIRC6/bruce. May interact with TBC1D14. Interacts with UNC119; in a cell cycle-dependent manner. GDP-bound and nucleotide-free forms interact with SH3BP5. Interacts (GDP-bound form) with KIF5A in a ZFYVE27-dependent manner. Interacts (GDP-bound form) with RELCH. Found in a complex composed of RELCH, OSBP1 and RAB11A. Interacts with TBC1D12. Interacts with DEF6. Interacts with ATP9A. Forms a heterotetramer with RAB11FIP3; the GTP-bound form is preferred for binding. Forms a complex with Rabin8/RAB3IP and RAB11FIP3, probably a heterohexamer with two of each protein subunit, where Rabin8/RAB3IP and RAB11FIP3 simultaneously bind to RAB11A; the complex promotes preciliary trafficking and cilia growth. Forms a complex containing RAB11A, ASAP1, Rabin8/RAB3IP, RAP11FIP3 and ARF4; the complex promotes preciliary trafficking; the complex binds to RHO in photoreceptor cells and promotes RHO ciliary transport. Interacts (GTP-bound form) with WDR44; the interaction prevents RAB11A-RAB3IP-RAB11FIP3 complex formation. The cofactor is Mg(2+).

Its subcellular location is the cell membrane. The protein resides in the endosome membrane. The protein localises to the recycling endosome membrane. It localises to the cleavage furrow. It is found in the cytoplasmic vesicle. Its subcellular location is the phagosome. The protein resides in the cytoplasmic vesicle membrane. The protein localises to the golgi apparatus. It localises to the trans-Golgi network. The enzyme catalyses GTP + H2O = GDP + phosphate + H(+). Regulated by guanine nucleotide exchange factors (GEFs) which promote the exchange of bound GDP for free GTP. Regulated by GTPase activating proteins (GAPs) which increase the GTP hydrolysis activity. Inhibited by GDP dissociation inhibitors (GDIs) which prevent Rab-GDP dissociation. The small GTPases Rab are key regulators of intracellular membrane trafficking, from the formation of transport vesicles to their fusion with membranes. Rabs cycle between an inactive GDP-bound form and an active GTP-bound form that is able to recruit to membranes different set of downstream effectors directly responsible for vesicle formation, movement, tethering and fusion. The small Rab GTPase RAB11A regulates endocytic recycling. Forms a functional Rab11/RAB11FIP3/dynein complex that regulates the movement of peripheral sorting endosomes (SE) along microtubule tracks toward the microtubule organizing center/centrosome, generating the endosomal recycling compartment (ERC). Acts as a major regulator of membrane delivery during cytokinesis. Together with MYO5B and RAB8A participates in epithelial cell polarization. Together with Rabin8/RAB3IP, RAB8A, the exocyst complex, PARD3, PRKCI, ANXA2, CDC42 and DNMBP promotes transcytosis of PODXL to the apical membrane initiation sites (AMIS), apical surface formation and lumenogenesis. Together with MYO5B participates in CFTR trafficking to the plasma membrane and TF (Transferrin) recycling in nonpolarized cells. Required in a complex with MYO5B and RAB11FIP2 for the transport of NPC1L1 to the plasma membrane. Participates in the sorting and basolateral transport of CDH1 from the Golgi apparatus to the plasma membrane. Regulates the recycling of FCGRT (receptor of Fc region of monomeric IgG) to basolateral membranes. May also play a role in melanosome transport and release from melanocytes. Promotes Rabin8/RAB3IP preciliary vesicular trafficking to mother centriole by forming a ciliary targeting complex containing Rab11, ASAP1, Rabin8/RAB3IP, RAB11FIP3 and ARF4, thereby regulating ciliogenesis initiation. On the contrary, upon LPAR1 receptor signaling pathway activation, interaction with phosphorylated WDR44 prevents Rab11-RAB3IP-RAB11FIP3 complex formation and cilia growth. Participates in the export of a subset of neosynthesized proteins through a Rab8-Rab10-Rab11-endososomal dependent export route via interaction with WDR44. The protein is Ras-related protein Rab-11A of Bos taurus (Bovine).